The primary structure comprises 515 residues: Nectin-1 (515 aa).

The first 30 residues, 1 to 30 (MARMGLAGAAGRWWGLALGLTAFFLPGTHT), serve as a signal peptide directing secretion. An Ig-like V-type domain is found at 31-141 (QVVQVNDSMY…GNRESQLNLT (111 aa)). The Extracellular segment spans residues 31–354 (QVVQVNDSMY…GRRAGQMPTA (324 aa)). N-linked (GlcNAc...) asparagine glycans are attached at residues asparagine 36, asparagine 72, asparagine 139, asparagine 202, asparagine 286, asparagine 297, and asparagine 332. Cysteines 51 and 124 form a disulfide. Ig-like C2-type domains lie at 145–243 (KPTN…TLNV) and 247–334 (PEVT…VNIT). 2 cysteine pairs are disulfide-bonded: cysteine 172–cysteine 226 and cysteine 269–cysteine 316. The segment at 282–299 (WTTLNGSLPKGVEAQNRT) is interaction with FGFR. Residues 355-375 (IIGGVAGSVLLVLIVVGGIIV) traverse the membrane as a helical segment. Residues 376–515 (ALRRRRHTFK…SFISKKEWYV (140 aa)) are Cytoplasmic-facing. The disordered stretch occupies residues 399-486 (YSKAGIPQHH…DGYGDRTLGY (88 aa)). 3 positions are modified to phosphoserine: serine 421, serine 433, and serine 434. Phosphotyrosine is present on tyrosine 435. Basic and acidic residues predominate over residues 447–464 (GERKVGGPHPKYDEDAKR). A Phosphoserine modification is found at serine 509.

It belongs to the nectin family. As to quaternary structure, cis- and trans-homodimer. Can form trans-heterodimers with NECTIN3 and with NECTIN4. Interaction between NECTIN1 and NECTIN3 on the pre- and postsynaptic sites, respectively, initiates the formation of puncta adherentia junctions between axons and dendrites. Interacts (via cytoplasmic domain) with AFDN (via PDZ domain); this interaction recruits NECTIN1 to cadherin-based adherens junctions and provides a connection with the actin cytoskeleton. Interacts with integrin alphaV/beta3. Interacts (via Ig-like C2-type domain 2) with FGFR1, FGFR2 and FGFR3. (Microbial infection) Interacts with herpes pseudorabies virus/PRV envelope glycoprotein D.

It localises to the cell membrane. The protein localises to the cell junction. Its subcellular location is the adherens junction. The protein resides in the presynaptic cell membrane. Its function is as follows. Cell adhesion molecule that promotes cell-cell contacts and plays important roles in the development of the nervous system. Acts by forming homophilic or heterophilic trans-dimers. Heterophilic interactions have been detected between NECTIN1 and NECTIN3 and between NECTIN1 and NECTIN4. Involved in axon guidance by promoting contacts between the commissural axons and the floor plate cells. Involved in synaptogegesis. Has some neurite outgrowth-promoting activity. Promotes formation of checkerboard-like cellular pattern of hair cells and supporting cells in the auditory epithelium via heterophilic interaction with NECTIN3: NECTIN1 is present in the membrane of hair cells and associates with NECTIN3 on supporting cells, thereby mediating heterotypic adhesion between these two cell types. Required for enamel mineralization. (Microbial infection) Acts as a receptor for pseudorabies virus/PRV. This Mus musculus (Mouse) protein is Nectin-1.